The sequence spans 306 residues: Ornithine carbamoyltransferase (306 aa).

Residues 46–49 (STRT), glutamine 73, arginine 97, and 124–127 (HPTQ) each bind carbamoyl phosphate. L-ornithine contacts are provided by residues asparagine 156, aspartate 220, and 224–225 (SM). Carbamoyl phosphate-binding positions include 260 to 261 (CL) and arginine 288.

It belongs to the aspartate/ornithine carbamoyltransferase superfamily. OTCase family.

It localises to the cytoplasm. It carries out the reaction carbamoyl phosphate + L-ornithine = L-citrulline + phosphate + H(+). It functions in the pathway amino-acid biosynthesis; L-arginine biosynthesis; L-arginine from L-ornithine and carbamoyl phosphate: step 1/3. Its function is as follows. Reversibly catalyzes the transfer of the carbamoyl group from carbamoyl phosphate (CP) to the N(epsilon) atom of ornithine (ORN) to produce L-citrulline. This chain is Ornithine carbamoyltransferase, found in Campylobacter jejuni (strain RM1221).